The following is a 435-amino-acid chain: Xylose isomerase (435 aa).

Catalysis depends on residues H100 and D103. Mg(2+) contacts are provided by E231, E267, H270, D295, D306, D308, and D338.

Belongs to the xylose isomerase family. In terms of assembly, homotetramer. Requires Mg(2+) as cofactor.

It is found in the cytoplasm. The catalysed reaction is alpha-D-xylose = alpha-D-xylulofuranose. This chain is Xylose isomerase, found in Brucella suis biovar 1 (strain 1330).